Consider the following 433-residue polypeptide: Enolase (433 aa).

Q167 contributes to the (2R)-2-phosphoglycerate binding site. E209 acts as the Proton donor in catalysis. Positions 246, 291, and 318 each coordinate Mg(2+). The (2R)-2-phosphoglycerate site is built by K343, R372, S373, and K394. K343 serves as the catalytic Proton acceptor.

This sequence belongs to the enolase family. As to quaternary structure, component of the RNA degradosome, a multiprotein complex involved in RNA processing and mRNA degradation. Mg(2+) is required as a cofactor.

It is found in the cytoplasm. The protein resides in the secreted. It localises to the cell surface. It carries out the reaction (2R)-2-phosphoglycerate = phosphoenolpyruvate + H2O. It participates in carbohydrate degradation; glycolysis; pyruvate from D-glyceraldehyde 3-phosphate: step 4/5. Its function is as follows. Catalyzes the reversible conversion of 2-phosphoglycerate (2-PG) into phosphoenolpyruvate (PEP). It is essential for the degradation of carbohydrates via glycolysis. The polypeptide is Enolase (Photobacterium profundum (strain SS9)).